The sequence spans 118 residues: MSAPAQPPAEGTEGAAPGGGPPGPPPNMTSNRRLQQTQAQVEEVVDIMRVNVDKVLERDQKLSELDDRADALQAGASQFESSAAKLKRKYWWKNCKMMIMLGAICAIIVVVIVIYFFT.

Over residues 1 to 15 the composition is skewed to low complexity; the sequence is MSAPAQPPAEGTEGA. The tract at residues 1–36 is disordered; the sequence is MSAPAQPPAEGTEGAAPGGGPPGPPPNMTSNRRLQQ. Residues 1–96 are Cytoplasmic-facing; it reads MSAPAQPPAE…KRKYWWKNCK (96 aa). Positions 33-93 constitute a v-SNARE coiled-coil homology domain; that stretch reads RLQQTQAQVE…AKLKRKYWWK (61 aa). Position 63 is a phosphoserine (serine 63). The chain crosses the membrane as a helical; Anchor for type IV membrane protein span at residues 97–116; the sequence is MMIMLGAICAIIVVVIVIYF. Over 117–118 the chain is Vesicular; that stretch reads FT.

The protein belongs to the synaptobrevin family. Interacts with VAPA and VAPB. (Microbial infection) Targeted and hydrolyzed by C.botulinum neurotoxin type X (BoNT/X) which hydrolyzes the 68-Arg-|-Ala-69 bond and probably inhibits neurotransmitter release. It remains unknown whether BoNT/X is ever produced, or what organisms it targets. In terms of tissue distribution, highly expressed in the zona incerta and rostral periolivary region of the brain. Other neuroanatomical regions show negligible expression. Expressed in the retina, expression observed in the outer segments of the photoreceptors, in the outer and inner plexiform layers, and in a subset of ganglion cells.

Its subcellular location is the cytoplasmic vesicle. It localises to the secretory vesicle. It is found in the synaptic vesicle membrane. The protein localises to the synapse. The protein resides in the synaptosome. Its subcellular location is the cytoplasmic vesicle membrane. In terms of biological role, involved in the targeting and/or fusion of transport vesicles to their target membrane. The polypeptide is Vesicle-associated membrane protein 1 (Vamp1) (Mus musculus (Mouse)).